We begin with the raw amino-acid sequence, 662 residues long: UvrABC system protein B (662 aa).

Residues 31–188 (DNIEGGEKAQ…NDLVDIQFER (158 aa)) enclose the Helicase ATP-binding domain. 44-51 (GATGTGKT) is an ATP binding site. The short motif at 97–120 (YYDYYQPEAYVPSSDTYIEKDSSV) is the Beta-hairpin element. The region spanning 435-601 (QIDDLLGEIN…TIKKEIRDLI (167 aa)) is the Helicase C-terminal domain. A UVR domain is found at 626-661 (KELVKKLEKQMQEAVEVLDFELAAQIRDMMLEVKAL).

This sequence belongs to the UvrB family. Forms a heterotetramer with UvrA during the search for lesions. Interacts with UvrC in an incision complex.

The protein resides in the cytoplasm. In terms of biological role, the UvrABC repair system catalyzes the recognition and processing of DNA lesions. A damage recognition complex composed of 2 UvrA and 2 UvrB subunits scans DNA for abnormalities. Upon binding of the UvrA(2)B(2) complex to a putative damaged site, the DNA wraps around one UvrB monomer. DNA wrap is dependent on ATP binding by UvrB and probably causes local melting of the DNA helix, facilitating insertion of UvrB beta-hairpin between the DNA strands. Then UvrB probes one DNA strand for the presence of a lesion. If a lesion is found the UvrA subunits dissociate and the UvrB-DNA preincision complex is formed. This complex is subsequently bound by UvrC and the second UvrB is released. If no lesion is found, the DNA wraps around the other UvrB subunit that will check the other stand for damage. This chain is UvrABC system protein B, found in Streptococcus pneumoniae (strain ATCC 700669 / Spain 23F-1).